We begin with the raw amino-acid sequence, 118 residues long: Aspartate 1-decarboxylase (118 aa).

The Schiff-base intermediate with substrate; via pyruvic acid role is filled by Ser25. The residue at position 25 (Ser25) is a Pyruvic acid (Ser). Thr57 contacts substrate. Tyr58 (proton donor) is an active-site residue. 73–75 (GAA) is a substrate binding site.

The protein belongs to the PanD family. Heterooctamer of four alpha and four beta subunits. Pyruvate serves as cofactor. In terms of processing, is synthesized initially as an inactive proenzyme, which is activated by self-cleavage at a specific serine bond to produce a beta-subunit with a hydroxyl group at its C-terminus and an alpha-subunit with a pyruvoyl group at its N-terminus.

It localises to the cytoplasm. The catalysed reaction is L-aspartate + H(+) = beta-alanine + CO2. It participates in cofactor biosynthesis; (R)-pantothenate biosynthesis; beta-alanine from L-aspartate: step 1/1. Catalyzes the pyruvoyl-dependent decarboxylation of aspartate to produce beta-alanine. The sequence is that of Aspartate 1-decarboxylase from Porphyromonas gingivalis (strain ATCC 33277 / DSM 20709 / CIP 103683 / JCM 12257 / NCTC 11834 / 2561).